The following is a 313-amino-acid chain: Porphobilinogen deaminase (313 aa).

Cysteine 241 carries the post-translational modification S-(dipyrrolylmethanemethyl)cysteine.

Belongs to the HMBS family. Monomer. Requires dipyrromethane as cofactor.

The enzyme catalyses 4 porphobilinogen + H2O = hydroxymethylbilane + 4 NH4(+). Its pathway is porphyrin-containing compound metabolism; protoporphyrin-IX biosynthesis; coproporphyrinogen-III from 5-aminolevulinate: step 2/4. It functions in the pathway porphyrin-containing compound metabolism; chlorophyll biosynthesis. Functionally, tetrapolymerization of the monopyrrole PBG into the hydroxymethylbilane pre-uroporphyrinogen in several discrete steps. The polypeptide is Porphobilinogen deaminase (Chlorobium phaeovibrioides (strain DSM 265 / 1930) (Prosthecochloris vibrioformis (strain DSM 265))).